A 511-amino-acid polypeptide reads, in one-letter code: uncharacterized protein (511 aa).

Residues 2–254 (LMDYEKERTE…NFQEKAPIHE (253 aa)) form the CoA carboxyltransferase N-terminal domain. Positions 2–506 (LMDYEKERTE…KEMTFTNRKH (505 aa)) are carboxyltransferase. The 247-residue stretch at 260–506 (HFETPLADVI…KEMTFTNRKH (247 aa)) folds into the CoA carboxyltransferase C-terminal domain.

Belongs to the AccD/PCCB family.

This is an uncharacterized protein from Bacillus subtilis (strain 168).